The following is a 123-amino-acid chain: Guanine nucleotide exchange factor MSS4 (123 aa).

Methionine 1 is modified (N-acetylmethionine). Positions 9 to 123 (ELVSAEGRNR…YVALERVSHE (115 aa)) constitute an MSS4 domain. Positions 23, 26, 94, and 97 each coordinate Zn(2+).

The protein belongs to the DSS4/MSS4 family. Interacts with RAB8A.

Its function is as follows. Guanine-nucleotide-releasing protein that acts on members of the SEC4/YPT1/RAB subfamily. Stimulates GDP release from both YPT1, RAB3A and RAB10, but is less active on these proteins than on the SEC4 protein. Might play a general role in vesicular transport. This Mus musculus (Mouse) protein is Guanine nucleotide exchange factor MSS4.